The following is a 179-amino-acid chain: Large ribosomal subunit protein uL6 (179 aa).

It belongs to the universal ribosomal protein uL6 family. As to quaternary structure, part of the 50S ribosomal subunit.

Its function is as follows. This protein binds to the 23S rRNA, and is important in its secondary structure. It is located near the subunit interface in the base of the L7/L12 stalk, and near the tRNA binding site of the peptidyltransferase center. This chain is Large ribosomal subunit protein uL6, found in Geotalea daltonii (strain DSM 22248 / JCM 15807 / FRC-32) (Geobacter daltonii).